Reading from the N-terminus, the 158-residue chain is Ribosome maturation factor RimP (158 aa).

It belongs to the RimP family.

The protein resides in the cytoplasm. Required for maturation of 30S ribosomal subunits. This Pseudomonas putida (strain ATCC 47054 / DSM 6125 / CFBP 8728 / NCIMB 11950 / KT2440) protein is Ribosome maturation factor RimP.